The following is a 550-amino-acid chain: CTP synthase (550 aa).

Positions 1–270 are amidoligase domain; that stretch reads MTKFVFVTGG…DRLICEELRL (270 aa). Serine 13 provides a ligand contact to CTP. Serine 13 is a binding site for UTP. ATP is bound by residues 14-19 and aspartate 71; that span reads SLGKGI. 2 residues coordinate Mg(2+): aspartate 71 and glutamate 144. Residues 151 to 153, 191 to 196, and lysine 227 contribute to the CTP site; these read DIE and KTKPTQ. Residues 191–196 and lysine 227 contribute to the UTP site; that span reads KTKPTQ. The region spanning 295-547 is the Glutamine amidotransferase type-1 domain; sequence TIGMVGKYVD…VEAALAGQQR (253 aa). Glycine 356 is a binding site for L-glutamine. The Nucleophile; for glutamine hydrolysis role is filled by cysteine 383. L-glutamine is bound by residues 384-387, glutamate 407, and arginine 473; that span reads LGMQ. Residues histidine 520 and glutamate 522 contribute to the active site.

The protein belongs to the CTP synthase family. As to quaternary structure, homotetramer.

The enzyme catalyses UTP + L-glutamine + ATP + H2O = CTP + L-glutamate + ADP + phosphate + 2 H(+). The catalysed reaction is L-glutamine + H2O = L-glutamate + NH4(+). It catalyses the reaction UTP + NH4(+) + ATP = CTP + ADP + phosphate + 2 H(+). Its pathway is pyrimidine metabolism; CTP biosynthesis via de novo pathway; CTP from UDP: step 2/2. With respect to regulation, allosterically activated by GTP, when glutamine is the substrate; GTP has no effect on the reaction when ammonia is the substrate. The allosteric effector GTP functions by stabilizing the protein conformation that binds the tetrahedral intermediate(s) formed during glutamine hydrolysis. Inhibited by the product CTP, via allosteric rather than competitive inhibition. In terms of biological role, catalyzes the ATP-dependent amination of UTP to CTP with either L-glutamine or ammonia as the source of nitrogen. Regulates intracellular CTP levels through interactions with the four ribonucleotide triphosphates. The chain is CTP synthase from Cupriavidus pinatubonensis (strain JMP 134 / LMG 1197) (Cupriavidus necator (strain JMP 134)).